A 437-amino-acid chain; its full sequence is Phosphomethylpyrimidine synthase (437 aa).

Residues asparagine 69, methionine 98, tyrosine 127, histidine 163, serine 185 to glycine 187, aspartate 226 to arginine 229, and glutamate 265 contribute to the substrate site. Histidine 269 lines the Zn(2+) pocket. Tyrosine 292 contributes to the substrate binding site. Histidine 333 contacts Zn(2+). [4Fe-4S] cluster contacts are provided by cysteine 409, cysteine 412, and cysteine 416.

The protein belongs to the ThiC family. It depends on [4Fe-4S] cluster as a cofactor.

The catalysed reaction is 5-amino-1-(5-phospho-beta-D-ribosyl)imidazole + S-adenosyl-L-methionine = 4-amino-2-methyl-5-(phosphooxymethyl)pyrimidine + CO + 5'-deoxyadenosine + formate + L-methionine + 3 H(+). The protein operates within cofactor biosynthesis; thiamine diphosphate biosynthesis. Functionally, catalyzes the synthesis of the hydroxymethylpyrimidine phosphate (HMP-P) moiety of thiamine from aminoimidazole ribotide (AIR) in a radical S-adenosyl-L-methionine (SAM)-dependent reaction. This Clostridium botulinum (strain ATCC 19397 / Type A) protein is Phosphomethylpyrimidine synthase.